Consider the following 284-residue polypeptide: ATP synthase gamma chain (284 aa).

Belongs to the ATPase gamma chain family. F-type ATPases have 2 components, CF(1) - the catalytic core - and CF(0) - the membrane proton channel. CF(1) has five subunits: alpha(3), beta(3), gamma(1), delta(1), epsilon(1). CF(0) has three main subunits: a, b and c.

It localises to the cell membrane. Functionally, produces ATP from ADP in the presence of a proton gradient across the membrane. The gamma chain is believed to be important in regulating ATPase activity and the flow of protons through the CF(0) complex. This is ATP synthase gamma chain from Bacillus licheniformis (strain ATCC 14580 / DSM 13 / JCM 2505 / CCUG 7422 / NBRC 12200 / NCIMB 9375 / NCTC 10341 / NRRL NRS-1264 / Gibson 46).